The following is a 255-amino-acid chain: 5-oxoprolinase subunit A (255 aa).

It belongs to the LamB/PxpA family. Forms a complex composed of PxpA, PxpB and PxpC.

The enzyme catalyses 5-oxo-L-proline + ATP + 2 H2O = L-glutamate + ADP + phosphate + H(+). In terms of biological role, catalyzes the cleavage of 5-oxoproline to form L-glutamate coupled to the hydrolysis of ATP to ADP and inorganic phosphate. The protein is 5-oxoprolinase subunit A of Campylobacter jejuni subsp. jejuni serotype O:2 (strain ATCC 700819 / NCTC 11168).